A 410-amino-acid polypeptide reads, in one-letter code: Arginine deiminase (410 aa).

The Amidino-cysteine intermediate role is filled by Cys399.

This sequence belongs to the arginine deiminase family.

The protein resides in the cytoplasm. It catalyses the reaction L-arginine + H2O = L-citrulline + NH4(+). Its pathway is amino-acid degradation; L-arginine degradation via ADI pathway; carbamoyl phosphate from L-arginine: step 1/2. The chain is Arginine deiminase from Listeria monocytogenes serovar 1/2a (strain ATCC BAA-679 / EGD-e).